Reading from the N-terminus, the 345-residue chain is Biotin synthase (345 aa).

Residues 49–276 enclose the Radical SAM core domain; it reads NQVQMSTLLS…ASFVRLSAGR (228 aa). Residues Cys-64, Cys-68, and Cys-71 each contribute to the [4Fe-4S] cluster site. The [2Fe-2S] cluster site is built by Cys-108, Cys-139, Cys-199, and Arg-271.

Belongs to the radical SAM superfamily. Biotin synthase family. In terms of assembly, homodimer. It depends on [4Fe-4S] cluster as a cofactor. [2Fe-2S] cluster serves as cofactor.

The catalysed reaction is (4R,5S)-dethiobiotin + (sulfur carrier)-SH + 2 reduced [2Fe-2S]-[ferredoxin] + 2 S-adenosyl-L-methionine = (sulfur carrier)-H + biotin + 2 5'-deoxyadenosine + 2 L-methionine + 2 oxidized [2Fe-2S]-[ferredoxin]. It participates in cofactor biosynthesis; biotin biosynthesis; biotin from 7,8-diaminononanoate: step 2/2. Its function is as follows. Catalyzes the conversion of dethiobiotin (DTB) to biotin by the insertion of a sulfur atom into dethiobiotin via a radical-based mechanism. The polypeptide is Biotin synthase (Nitrosococcus oceani (strain ATCC 19707 / BCRC 17464 / JCM 30415 / NCIMB 11848 / C-107)).